A 650-amino-acid chain; its full sequence is Chaperone protein DnaK (650 aa).

Thr-200 is modified (phosphothreonine; by autocatalysis). Residues 614 to 634 (AGAAGAAGAAEGAAHAGGAQQ) form a disordered region.

The protein belongs to the heat shock protein 70 family.

Its function is as follows. Acts as a chaperone. The chain is Chaperone protein DnaK from Burkholderia cenocepacia (strain ATCC BAA-245 / DSM 16553 / LMG 16656 / NCTC 13227 / J2315 / CF5610) (Burkholderia cepacia (strain J2315)).